The primary structure comprises 248 residues: Granulin (248 aa).

The protein belongs to the polyhedrin family.

In terms of biological role, component of the virus occlusion bodies, which are large proteinaceous structures, that protect the virus from the outside environment for extended periods until they are ingested by insect larvae. The polypeptide is Granulin (Trichoplusia ni (Cabbage looper)).